A 74-amino-acid chain; its full sequence is Sodium channel neurotoxin MeuNaTxalpha-11 (74 aa).

The first 7 residues, 1 to 7, serve as a signal peptide directing secretion; it reads LMTGVES. The LCN-type CS-alpha/beta domain occupies 9–73; that stretch reads RDAYIAKPHN…VPIRIPGKCH (65 aa). Disulfide bonds link Cys19–Cys72, Cys23–Cys45, Cys31–Cys55, and Cys35–Cys57. Residue Arg74 is a propeptide, removed by a carboxypeptidase.

Belongs to the long (4 C-C) scorpion toxin superfamily. Sodium channel inhibitor family. Alpha subfamily. In terms of tissue distribution, expressed by the venom gland.

It is found in the secreted. Alpha toxins bind voltage-independently at site-3 of sodium channels (Nav) and inhibit the inactivation of the activated channels, thereby blocking neuronal transmission. The chain is Sodium channel neurotoxin MeuNaTxalpha-11 from Mesobuthus eupeus (Lesser Asian scorpion).